The sequence spans 439 residues: Cysteine--tRNA ligase (439 aa).

Cys26 serves as a coordination point for Zn(2+). The 'HIGH' region motif lies at 28 to 38; sequence PTVYNHVHIGN. Zn(2+) contacts are provided by Cys206, His231, and Glu235. A 'KMSKS' region motif is present at residues 263–267; the sequence is KMSKS. Residue Lys266 coordinates ATP.

Belongs to the class-I aminoacyl-tRNA synthetase family. In terms of assembly, monomer. Zn(2+) is required as a cofactor.

The protein resides in the cytoplasm. The enzyme catalyses tRNA(Cys) + L-cysteine + ATP = L-cysteinyl-tRNA(Cys) + AMP + diphosphate. This Malacoplasma penetrans (strain HF-2) (Mycoplasma penetrans) protein is Cysteine--tRNA ligase.